The sequence spans 154 residues: 6,7-dimethyl-8-ribityllumazine synthase (154 aa).

5-amino-6-(D-ribitylamino)uracil is bound by residues F21, 55–57, and 79–81; these read AFE and CVI. Residue 84-85 coordinates (2S)-2-hydroxy-3-oxobutyl phosphate; that stretch reads AT. H87 functions as the Proton donor in the catalytic mechanism. F112 serves as a coordination point for 5-amino-6-(D-ribitylamino)uracil. A (2S)-2-hydroxy-3-oxobutyl phosphate-binding site is contributed by R126.

It belongs to the DMRL synthase family. As to quaternary structure, forms an icosahedral capsid composed of 60 subunits, arranged as a dodecamer of pentamers.

The catalysed reaction is (2S)-2-hydroxy-3-oxobutyl phosphate + 5-amino-6-(D-ribitylamino)uracil = 6,7-dimethyl-8-(1-D-ribityl)lumazine + phosphate + 2 H2O + H(+). The protein operates within cofactor biosynthesis; riboflavin biosynthesis; riboflavin from 2-hydroxy-3-oxobutyl phosphate and 5-amino-6-(D-ribitylamino)uracil: step 1/2. In terms of biological role, catalyzes the formation of 6,7-dimethyl-8-ribityllumazine by condensation of 5-amino-6-(D-ribitylamino)uracil with 3,4-dihydroxy-2-butanone 4-phosphate. This is the penultimate step in the biosynthesis of riboflavin. In Staphylococcus aureus (strain MRSA252), this protein is 6,7-dimethyl-8-ribityllumazine synthase.